Consider the following 436-residue polypeptide: Glutamyl-tRNA(Gln) amidotransferase subunit D (436 aa).

The region spanning 91–420 is the Asparaginase/glutaminase domain; the sequence is QNISIISTGG…GEVAKLMNKN (330 aa). Residues Thr-101, Thr-177, Asp-178, and Lys-254 contribute to the active site.

It belongs to the asparaginase 1 family. GatD subfamily. As to quaternary structure, heterodimer of GatD and GatE.

The enzyme catalyses L-glutamyl-tRNA(Gln) + L-glutamine + ATP + H2O = L-glutaminyl-tRNA(Gln) + L-glutamate + ADP + phosphate + H(+). Its function is as follows. Allows the formation of correctly charged Gln-tRNA(Gln) through the transamidation of misacylated Glu-tRNA(Gln) in organisms which lack glutaminyl-tRNA synthetase. The reaction takes place in the presence of glutamine and ATP through an activated gamma-phospho-Glu-tRNA(Gln). The GatDE system is specific for glutamate and does not act on aspartate. The protein is Glutamyl-tRNA(Gln) amidotransferase subunit D of Methanobrevibacter smithii (strain ATCC 35061 / DSM 861 / OCM 144 / PS).